Here is a 362-residue protein sequence, read N- to C-terminus: Phosphoserine aminotransferase (362 aa).

L-glutamate-binding residues include serine 9 and arginine 42. Residues 76–77 (GR), tryptophan 102, threonine 153, aspartate 174, and glutamine 197 each bind pyridoxal 5'-phosphate. Lysine 198 is subject to N6-(pyridoxal phosphate)lysine. Position 239–240 (239–240 (NT)) interacts with pyridoxal 5'-phosphate.

It belongs to the class-V pyridoxal-phosphate-dependent aminotransferase family. SerC subfamily. As to quaternary structure, homodimer. Requires pyridoxal 5'-phosphate as cofactor.

Its subcellular location is the cytoplasm. It catalyses the reaction O-phospho-L-serine + 2-oxoglutarate = 3-phosphooxypyruvate + L-glutamate. It carries out the reaction 4-(phosphooxy)-L-threonine + 2-oxoglutarate = (R)-3-hydroxy-2-oxo-4-phosphooxybutanoate + L-glutamate. It participates in amino-acid biosynthesis; L-serine biosynthesis; L-serine from 3-phospho-D-glycerate: step 2/3. Its pathway is cofactor biosynthesis; pyridoxine 5'-phosphate biosynthesis; pyridoxine 5'-phosphate from D-erythrose 4-phosphate: step 3/5. Functionally, catalyzes the reversible conversion of 3-phosphohydroxypyruvate to phosphoserine and of 3-hydroxy-2-oxo-4-phosphonooxybutanoate to phosphohydroxythreonine. This chain is Phosphoserine aminotransferase, found in Klebsiella pneumoniae (strain 342).